The chain runs to 68 residues: MKNQLNFNIVSDEELAEVNGGSLQYVMSAGPYTWYKDTRTGKTICKQTIDTASYTFGVMAEGWGKTFH.

The propeptide occupies 1–21; sequence MKNQLNFNIVSDEELAEVNGG.

The protein localises to the secreted. Functionally, kills Lactococci by dissipating the membrane potential of the cells. In Lactococcus lactis subsp. cremoris (Streptococcus cremoris), this protein is Bacteriocin lactococcin-B (lcnB).